The sequence spans 428 residues: Trigger factor (428 aa).

The PPIase FKBP-type domain occupies 163 to 248; the sequence is GDTAVIDFEG…VHEIKEKRLP (86 aa).

This sequence belongs to the FKBP-type PPIase family. Tig subfamily.

It localises to the cytoplasm. It carries out the reaction [protein]-peptidylproline (omega=180) = [protein]-peptidylproline (omega=0). Involved in protein export. Acts as a chaperone by maintaining the newly synthesized protein in an open conformation. Functions as a peptidyl-prolyl cis-trans isomerase. The sequence is that of Trigger factor from Geobacillus sp. (strain WCH70).